Consider the following 425-residue polypeptide: tRNA(Ile)-lysidine synthase (425 aa).

Position 27-32 (27-32 (SGGLDS)) interacts with ATP.

The protein belongs to the tRNA(Ile)-lysidine synthase family.

It localises to the cytoplasm. The catalysed reaction is cytidine(34) in tRNA(Ile2) + L-lysine + ATP = lysidine(34) in tRNA(Ile2) + AMP + diphosphate + H(+). Ligates lysine onto the cytidine present at position 34 of the AUA codon-specific tRNA(Ile) that contains the anticodon CAU, in an ATP-dependent manner. Cytidine is converted to lysidine, thus changing the amino acid specificity of the tRNA from methionine to isoleucine. The polypeptide is tRNA(Ile)-lysidine synthase (Streptococcus pneumoniae (strain 70585)).